The sequence spans 213 residues: Endoplasmic reticulum vesicle protein 25 (213 aa).

Residues 1–20 form the signal peptide; it reads MILRIPSLLYLFTLLTAVYA. The Lumenal portion of the chain corresponds to 21–181; the sequence is VKFDLTSDRN…TNESTNQRVK (161 aa). Residues 33-122 enclose the GOLD domain; it reads PSIIWNFASA…VRSVELDVDI (90 aa). A helical membrane pass occupies residues 182–202; the sequence is VFSVLIICCTIGLGVWQLLHL. Residues 203-213 lie on the Cytoplasmic side of the membrane; that stretch reads RSFFKRKYLID.

The protein belongs to the EMP24/GP25L family.

The protein localises to the endoplasmic reticulum membrane. Its subcellular location is the golgi apparatus membrane. Its function is as follows. Constituent of COPII-coated endoplasmic reticulum-derived transport vesicles. Required for efficient transport of a subset of secretory proteins to the Golgi. Facilitates retrograde transport from the Golgi to the endoplasmic reticulum. In Cryptococcus neoformans var. neoformans serotype D (strain B-3501A) (Filobasidiella neoformans), this protein is Endoplasmic reticulum vesicle protein 25 (ERV25).